A 28-amino-acid polypeptide reads, in one-letter code: Ranatuerin-2SEc (28 aa).

A disulfide bond links C23 and C28.

As to expression, expressed by the skin glands.

It localises to the secreted. Mast cell degranulating peptide. Causes histamine release from rat peritoneal mast cells in vitro. Has antibacterial activity against the Gram-negative bacterium E.coli K12 and Gram-positive bacterium M.luteus NCT C2665. This chain is Ranatuerin-2SEc, found in Lithobates sevosus (Dusky gopher frog).